A 316-amino-acid polypeptide reads, in one-letter code: Ribosomal RNA small subunit methyltransferase H (316 aa).

S-adenosyl-L-methionine-binding positions include 35–37, D55, F80, D102, and Q109; that span reads GGH.

It belongs to the methyltransferase superfamily. RsmH family.

Its subcellular location is the cytoplasm. It catalyses the reaction cytidine(1402) in 16S rRNA + S-adenosyl-L-methionine = N(4)-methylcytidine(1402) in 16S rRNA + S-adenosyl-L-homocysteine + H(+). Specifically methylates the N4 position of cytidine in position 1402 (C1402) of 16S rRNA. The polypeptide is Ribosomal RNA small subunit methyltransferase H (Colwellia psychrerythraea (strain 34H / ATCC BAA-681) (Vibrio psychroerythus)).